Consider the following 251-residue polypeptide: Imidazole glycerol phosphate synthase subunit HisF (251 aa).

Catalysis depends on residues Asp-12 and Asp-131.

It belongs to the HisA/HisF family. Heterodimer of HisH and HisF.

It localises to the cytoplasm. The enzyme catalyses 5-[(5-phospho-1-deoxy-D-ribulos-1-ylimino)methylamino]-1-(5-phospho-beta-D-ribosyl)imidazole-4-carboxamide + L-glutamine = D-erythro-1-(imidazol-4-yl)glycerol 3-phosphate + 5-amino-1-(5-phospho-beta-D-ribosyl)imidazole-4-carboxamide + L-glutamate + H(+). Its pathway is amino-acid biosynthesis; L-histidine biosynthesis; L-histidine from 5-phospho-alpha-D-ribose 1-diphosphate: step 5/9. In terms of biological role, IGPS catalyzes the conversion of PRFAR and glutamine to IGP, AICAR and glutamate. The HisF subunit catalyzes the cyclization activity that produces IGP and AICAR from PRFAR using the ammonia provided by the HisH subunit. The polypeptide is Imidazole glycerol phosphate synthase subunit HisF (Streptomyces griseus subsp. griseus (strain JCM 4626 / CBS 651.72 / NBRC 13350 / KCC S-0626 / ISP 5235)).